We begin with the raw amino-acid sequence, 188 residues long: Apolipoprotein M (188 aa).

Positions 1–22 form a signal peptide, not cleaved; it reads MFHQIWAALLYFYGIILNSIYQ. Cystine bridges form between cysteine 23-cysteine 167, cysteine 95-cysteine 183, and cysteine 128-cysteine 157. Asparagine 135 carries an N-linked (GlcNAc...) asparagine glycan. Tetradecanoate contacts are provided by glutamate 136 and arginine 143.

This sequence belongs to the calycin superfamily. Lipocalin family. Highly divergent. In terms of assembly, interacts with LRP2; LRP2 mediates APOM renal uptake and subsequent lysosomal degradation.

Its subcellular location is the secreted. Probably involved in lipid transport. Can bind sphingosine-1-phosphate, myristic acid, palmitic acid and stearic acid, retinol, all-trans-retinoic acid and 9-cis-retinoic acid. The protein is Apolipoprotein M (APOM) of Pongo abelii (Sumatran orangutan).